Here is a 259-residue protein sequence, read N- to C-terminus: Type III pantothenate kinase (259 aa).

6 to 13 lines the ATP pocket; sequence DVGNTNCT. 107-110 provides a ligand contact to substrate; the sequence is GSDR. Catalysis depends on D109, which acts as the Proton acceptor. D129 contributes to the K(+) binding site. T132 contributes to the ATP binding site. A substrate-binding site is contributed by T184.

The protein belongs to the type III pantothenate kinase family. As to quaternary structure, homodimer. NH4(+) serves as cofactor. K(+) is required as a cofactor.

The protein resides in the cytoplasm. It carries out the reaction (R)-pantothenate + ATP = (R)-4'-phosphopantothenate + ADP + H(+). It participates in cofactor biosynthesis; coenzyme A biosynthesis; CoA from (R)-pantothenate: step 1/5. Its function is as follows. Catalyzes the phosphorylation of pantothenate (Pan), the first step in CoA biosynthesis. This chain is Type III pantothenate kinase, found in Listeria monocytogenes serotype 4b (strain CLIP80459).